Reading from the N-terminus, the 333-residue chain is Small ribosomal subunit protein uS2 (333 aa).

This sequence belongs to the universal ribosomal protein uS2 family.

This Azorhizobium caulinodans (strain ATCC 43989 / DSM 5975 / JCM 20966 / LMG 6465 / NBRC 14845 / NCIMB 13405 / ORS 571) protein is Small ribosomal subunit protein uS2.